A 210-amino-acid polypeptide reads, in one-letter code: Syntaxin-binding protein 6 (210 aa).

At Ser-2 the chain carries N-acetylserine. One can recognise a v-SNARE coiled-coil homology domain in the interval 151–210; sequence GNSILHSAADSVTSAVQKASQALNERGERLGRAEEKTEDLKNSAQQFAETAHKLAMKHKC.

Part of a ternary complex containing SNAP25 and STX1A that can be dissociated by NAPA and NSF. Interacts with STX4A.

It localises to the cytoplasm. Its subcellular location is the membrane. Functionally, forms non-fusogenic complexes with SNAP25 and STX1A and may thereby modulate the formation of functional SNARE complexes and exocytosis. The chain is Syntaxin-binding protein 6 (STXBP6) from Bos taurus (Bovine).